We begin with the raw amino-acid sequence, 243 residues long: Probable 2-phosphosulfolactate phosphatase (243 aa).

It belongs to the ComB family. It depends on Mg(2+) as a cofactor.

The enzyme catalyses (2R)-O-phospho-3-sulfolactate + H2O = (2R)-3-sulfolactate + phosphate. The chain is Probable 2-phosphosulfolactate phosphatase from Prochlorococcus marinus (strain MIT 9303).